Reading from the N-terminus, the 26-residue chain is Acetyl-CoA acetyltransferase (26 aa).

The Acyl-thioester intermediate role is filled by Cys21.

Belongs to the thiolase-like superfamily. Thiolase family. In terms of assembly, homotetramer. In terms of processing, succinylation, adjacent to a coenzyme A binding site. Desuccinylated by SIRT5.

It localises to the mitochondrion. It carries out the reaction 2 acetyl-CoA = acetoacetyl-CoA + CoA. The polypeptide is Acetyl-CoA acetyltransferase (Sus scrofa (Pig)).